The following is a 292-amino-acid chain: 1D-myo-inositol 2-acetamido-2-deoxy-alpha-D-glucopyranoside deacetylase (292 aa).

3 residues coordinate Zn(2+): histidine 11, aspartate 14, and histidine 146.

The protein belongs to the MshB deacetylase family. The cofactor is Zn(2+).

The catalysed reaction is 1D-myo-inositol 2-acetamido-2-deoxy-alpha-D-glucopyranoside + H2O = 1D-myo-inositol 2-amino-2-deoxy-alpha-D-glucopyranoside + acetate. Functionally, catalyzes the deacetylation of 1D-myo-inositol 2-acetamido-2-deoxy-alpha-D-glucopyranoside (GlcNAc-Ins) in the mycothiol biosynthesis pathway. This Acidothermus cellulolyticus (strain ATCC 43068 / DSM 8971 / 11B) protein is 1D-myo-inositol 2-acetamido-2-deoxy-alpha-D-glucopyranoside deacetylase.